An 859-amino-acid polypeptide reads, in one-letter code: Rab effector MyRIP (859 aa).

One can recognise a RabBD domain in the interval 4–124 (KLDLSGLTDD…AQSLEWFYNN (121 aa)). An FYVE-type zinc finger spans residues 63–105 (CCMRCCSPFTFLVNTKRQCGDCKFNVCKSCCSYQKHEKAWVCC). A myosin-binding region spans residues 143 to 560 (RKHRLESGAC…LDTHQVSDDL (418 aa)). Residues 193 to 209 (VALRVAEEAIEEAISKA) form a PKA-binding region. The interval 232–248 (LTEELATTILQKIIRKQ) is negative regulation of PKA-binding. Residues 251–285 (KSEQQVEEEPGWPHPQSCSTKVADEGTSASPGGYR) are disordered. Ser-298 carries the post-translational modification Phosphoserine. 3 disordered regions span residues 302–374 (EEAL…KPKS), 386–629 (VASA…SQSV), and 783–812 (DQKQ…KAEK). Positions 316–326 (QPRDQGQHPRA) are enriched in basic and acidic residues. At Ser-350 the chain carries Phosphoserine. Residues 393 to 403 (MGSDSEEDFDW) show a composition bias toward acidic residues. Over residues 435-450 (PIAASPSSALSPNPEA) the composition is skewed to low complexity. Basic and acidic residues-rich tracts occupy residues 484 to 494 (AAEKMRLHGEL) and 607 to 617 (SEPKTESENQK). Positions 495-856 (DVNFNPQLAS…DLMEPALESA (362 aa)) are actin-binding. 2 stretches are compositionally biased toward polar residues: residues 618–629 (ESLSSEDNSQSV) and 787–796 (RTQVQTIDTS).

Binds MYO5A, MYO7A and F-actin. Binds RAB27A that has been activated by GTP-binding via its N-terminus. Interacts with PRKAR2A. Interacts with components of the exocyst complex, including EXOC3 and EXOC4. Detected in brain, skin, heart, adrenal medulla, pancreas, intestine, liver, kidney, muscle and testis.

It localises to the cytoplasm. The protein localises to the perinuclear region. The protein resides in the cytoplasmic vesicle. Its subcellular location is the secretory vesicle. Rab effector protein involved in melanosome transport. Serves as link between melanosome-bound RAB27A and the motor proteins MYO5A and MYO7A. May link RAB27A-containing vesicles to actin filaments. Functions as a protein kinase A-anchoring protein (AKAP). May act as a scaffolding protein that links PKA to components of the exocytosis machinery, thus facilitating exocytosis, including insulin release. The sequence is that of Rab effector MyRIP (MYRIP) from Homo sapiens (Human).